A 104-amino-acid chain; its full sequence is MALTQQKIRIRLQAFDHGLLDQSCSKIVDTANRTNAAAVGPIPLPTRIRRYCVLRSPHVDKDSREHFETRTHRRIIDIYQPSAKTIDALMRLDLPAGVDIEVKL.

Belongs to the universal ribosomal protein uS10 family. In terms of assembly, part of the 30S ribosomal subunit.

In terms of biological role, involved in the binding of tRNA to the ribosomes. The protein is Small ribosomal subunit protein uS10 of Gloeobacter violaceus (strain ATCC 29082 / PCC 7421).